The chain runs to 159 residues: Ribosomal RNA large subunit methyltransferase H (159 aa).

S-adenosyl-L-methionine contacts are provided by residues Leu-76, Gly-108, and 127-132 (FSKMTF).

It belongs to the RNA methyltransferase RlmH family. As to quaternary structure, homodimer.

The protein localises to the cytoplasm. It catalyses the reaction pseudouridine(1915) in 23S rRNA + S-adenosyl-L-methionine = N(3)-methylpseudouridine(1915) in 23S rRNA + S-adenosyl-L-homocysteine + H(+). Functionally, specifically methylates the pseudouridine at position 1915 (m3Psi1915) in 23S rRNA. The polypeptide is Ribosomal RNA large subunit methyltransferase H (Bacillus velezensis (strain DSM 23117 / BGSC 10A6 / LMG 26770 / FZB42) (Bacillus amyloliquefaciens subsp. plantarum)).